The sequence spans 385 residues: Probable alpha-galactosidase (385 aa).

An N-terminal signal peptide occupies residues 1-19 (MMKIAATLLATIALATVNA). Disulfide bonds link cysteine 40-cysteine 72 and cysteine 119-cysteine 149. The active-site Nucleophile is the aspartate 147. 180 to 184 (DWGYE) contributes to the substrate binding site. The active-site Proton donor is the aspartate 202.

The protein belongs to the glycosyl hydrolase 27 family.

The catalysed reaction is Hydrolysis of terminal, non-reducing alpha-D-galactose residues in alpha-D-galactosides, including galactose oligosaccharides, galactomannans and galactolipids.. This chain is Probable alpha-galactosidase (melA), found in Dictyostelium discoideum (Social amoeba).